Here is a 487-residue protein sequence, read N- to C-terminus: Histamine H1 receptor (487 aa).

Residues 1–29 lie on the Extracellular side of the membrane; that stretch reads MSLPNSSCLLEDKMCEGNKTTMASPQLMP. N-linked (GlcNAc...) asparagine glycosylation is found at Asn5 and Asn18. A helical transmembrane segment spans residues 30 to 50; that stretch reads LVVVLSTICLVTVGLNLLVLY. Over 51-64 the chain is Cytoplasmic; sequence AVRSERKLHTVGNL. A helical transmembrane segment spans residues 65–89; that stretch reads YIVSLSVADLIVGAVVMPMNILYLL. Residues 90 to 97 lie on the Extracellular side of the membrane; that stretch reads MSKWSLGR. The helical transmembrane segment at 98–123 threads the bilayer; that stretch reads PLCLFWLSMDYVASTASIFSVFILCI. Cys100 and Cys180 are oxidised to a cystine. Positions 107 and 112 each coordinate histamine. Positions 107–112 are important for agonist binding; the sequence is DYVAST. The Cytoplasmic segment spans residues 124 to 144; that stretch reads DRYRSVQQPLRYLKYRTKTRA. Phosphothreonine is present on residues Thr140 and Thr142. The chain crosses the membrane as a helical span at residues 145–164; the sequence is SATILGAWFLSFLWVIPILG. The Extracellular segment spans residues 165–188; that stretch reads WNHFMQQTSVRREDKCETDFYDVT. Residues 189-211 traverse the membrane as a helical segment; sequence WFKVMTAIINFYLPTLLMLWFYA. Asn198 provides a ligand contact to histamine. Residues 212 to 416 are Cytoplasmic-facing; it reads KIYKAVRQHC…MNRERKAAKQ (205 aa). Position 230 is a phosphoserine (Ser230). Residues 238 to 261 show a composition bias toward basic and acidic residues; the sequence is KLRPENPKGDAKKPGKESPWEVLK. The segment at 238–292 is disordered; sequence KLRPENPKGDAKKPGKESPWEVLKRKPKDAGGGSVLKSPSQTXKEMKSPVVFSQE. At Thr279 the chain carries Phosphothreonine. Ser344 and Ser347 each carry phosphoserine. Residues 345-379 are disordered; the sequence is EISEDQMLGDSQSFSRTDSDTTTETAPGKGKLRSG. The span at 353–369 shows a compositional bias: polar residues; the sequence is GDSQSFSRTDSDTTTET. Residues Ser380, Ser396, and Ser398 each carry the phosphoserine modification. The chain crosses the membrane as a helical span at residues 417–440; it reads LGFIMAAFILCWIPYFIFFMVIAF. The important for agonist binding stretch occupies residues 424–428; the sequence is FILCW. Tyr431 serves as a coordination point for histamine. Cysteines 441 and 444 form a disulfide. The Extracellular portion of the chain corresponds to 441–446; sequence CKNCCN. Residues 447–469 form a helical membrane-spanning segment; sequence EHLHMFTIWLGYINSTLNPLIYP. Over 470–487 the chain is Cytoplasmic; it reads LCNENFKKTFKRILHIRS.

Belongs to the G-protein coupled receptor 1 family. Post-translationally, phosphorylation at sites in the second and third cytoplasmic loops independently contribute to agonist-induced receptor down-regulation.

The protein localises to the cell membrane. In terms of biological role, G-protein-coupled receptor for histamine, a biogenic amine that functions as an immune modulator and a neurotransmitter. Through the H1 receptor, histamine mediates the contraction of smooth muscles and increases capillary permeability due to contraction of terminal venules. Also mediates neurotransmission in the central nervous system and thereby regulates circadian rhythms, emotional and locomotor activities as well as cognitive functions. This is Histamine H1 receptor from Pan troglodytes (Chimpanzee).